The chain runs to 226 residues: UPF0758 protein Daci_1904 (226 aa).

Positions 104–226 constitute an MPN domain; sequence ALASPEAVAR…SLSMAGQGML (123 aa). Zn(2+)-binding residues include His-175, His-177, and Asp-188. The JAMM motif signature appears at 175–188; that stretch reads HNHPSGQVQASAAD.

The protein belongs to the UPF0758 family.

This is UPF0758 protein Daci_1904 from Delftia acidovorans (strain DSM 14801 / SPH-1).